A 297-amino-acid chain; its full sequence is Chelated iron transport system membrane protein YfeD (297 aa).

The next 8 membrane-spanning stretches (helical) occupy residues 20 to 40, 58 to 78, 96 to 116, 133 to 153, 172 to 192, 197 to 217, 224 to 244, and 248 to 268; these read AIVA…YLVL, IVLA…SGIF, TVMG…FSRI, ISLT…LVVL, IGLP…LTIV, AVGV…AFMI, MLVV…LISF, and GATG…ALIY.

This sequence belongs to the ABC-3 integral membrane protein family.

It is found in the cell inner membrane. Functionally, part of an ATP-driven transport system YfeABCD for chelated iron. This is Chelated iron transport system membrane protein YfeD (yfeD) from Yersinia pestis.